The chain runs to 486 residues: 23S rRNA (uracil(1939)-C(5))-methyltransferase RlmD (486 aa).

In terms of domain architecture, TRAM spans 10 to 71; sequence TVKAPEYLPD…SSFEKAVVMA (62 aa). [4Fe-4S] cluster contacts are provided by Cys84, Cys94, Cys97, and Cys176. Residues Gln285, Phe314, Asn319, Glu335, Asn370, and Asp391 each coordinate S-adenosyl-L-methionine. The active-site Nucleophile is the Cys442.

Belongs to the class I-like SAM-binding methyltransferase superfamily. RNA M5U methyltransferase family. RlmD subfamily.

The enzyme catalyses uridine(1939) in 23S rRNA + S-adenosyl-L-methionine = 5-methyluridine(1939) in 23S rRNA + S-adenosyl-L-homocysteine + H(+). Its function is as follows. Catalyzes the formation of 5-methyl-uridine at position 1939 (m5U1939) in 23S rRNA. This is 23S rRNA (uracil(1939)-C(5))-methyltransferase RlmD from Polaromonas sp. (strain JS666 / ATCC BAA-500).